We begin with the raw amino-acid sequence, 810 residues long: Phenylalanine--tRNA ligase beta subunit (810 aa).

The tRNA-binding domain occupies 39-150; that stretch reads RSWAAGVVLG…LDLPSGSPVG (112 aa). Residues 407–495 form the B5 domain; sequence RGEAIINLRL…RLYGYDHFCE (89 aa). 4 residues coordinate Mg(2+): Asp473, Asp479, Glu482, and Glu483. The FDX-ACB domain occupies 716–809; the sequence is SPYPAVARDL…LTKQFAVSLR (94 aa).

It belongs to the phenylalanyl-tRNA synthetase beta subunit family. Type 1 subfamily. As to quaternary structure, tetramer of two alpha and two beta subunits. Requires Mg(2+) as cofactor.

Its subcellular location is the cytoplasm. It carries out the reaction tRNA(Phe) + L-phenylalanine + ATP = L-phenylalanyl-tRNA(Phe) + AMP + diphosphate + H(+). This chain is Phenylalanine--tRNA ligase beta subunit (pheT), found in Synechocystis sp. (strain ATCC 27184 / PCC 6803 / Kazusa).